The sequence spans 448 residues: MPRWLSAPEHARHRTVAASAGAPWTPRRVAMIAVHTSPLEIPGCGDAGGLNVYVAQIARRLASRGIDVDVFTRATRRDLPPQQRLAPGVTVRNVVAGPLEPLPKDELPVHLCAFTAAVLRAEAMREPGWYDVIHSHYWLSGEVGRVASQRWGVPLVHTMHTLAKVKNAALAEGDVPEPGRRVIGEADVVAAADRLVTNTWTEARQLVDLYGAEPDRIRVVPPGVETAIFRPGDSARARRRLGLPIDGCVVLFVGRLQPLKGPDIAVRAAAEFLSTHPGMRSTFRLVIVGGPSGSRSTEPERLRALAADLGVADAVIFAPPMPPDRLVEFYRAATVTIVPSHSESFGLVALESQACGTPVVAARVGGLTTAVRDGESGLLVDGHDPARYAGAIGRLLDPGLRAELVRGAVAHAMRFHWDNTVEGILGVYRDALAERRTAATQRLASRVG.

Residues His-35, 46–51 (DAGGLN), Lys-104, Tyr-137, Thr-161, and Arg-181 contribute to the 1D-myo-inositol 3-phosphate site. Residue Gly-49 coordinates UDP-N-acetyl-alpha-D-glucosamine. Positions 255, 260, and 321 each coordinate UDP-N-acetyl-alpha-D-glucosamine. Residues Tyr-330, Arg-331, and Ala-333 each coordinate Mg(2+). 2 residues coordinate UDP-N-acetyl-alpha-D-glucosamine: Glu-343 and Glu-351. Thr-357 serves as a coordination point for Mg(2+).

This sequence belongs to the glycosyltransferase group 1 family. MshA subfamily. In terms of assembly, homodimer.

The catalysed reaction is 1D-myo-inositol 3-phosphate + UDP-N-acetyl-alpha-D-glucosamine = 1D-myo-inositol 2-acetamido-2-deoxy-alpha-D-glucopyranoside 3-phosphate + UDP + H(+). Functionally, catalyzes the transfer of a N-acetyl-glucosamine moiety to 1D-myo-inositol 3-phosphate to produce 1D-myo-inositol 2-acetamido-2-deoxy-glucopyranoside 3-phosphate in the mycothiol biosynthesis pathway. In Acidothermus cellulolyticus (strain ATCC 43068 / DSM 8971 / 11B), this protein is D-inositol 3-phosphate glycosyltransferase.